The primary structure comprises 346 residues: Parapinopsin (346 aa).

Residues 1-29 lie on the Extracellular side of the membrane; sequence MASIILINFSETDTLHLGSVNDHIMPRIG. Residue asparagine 8 is glycosylated (N-linked (GlcNAc...) asparagine). A helical transmembrane segment spans residues 30 to 54; sequence YTILSIIMALSSTFGIILNMVVIIV. The Cytoplasmic segment spans residues 55 to 66; that stretch reads TVRYKQLRQPLN. The chain crosses the membrane as a helical span at residues 67 to 91; it reads YALVNLAVADLGCPVFGGLLTAVTN. Topologically, residues 92–106 are extracellular; the sequence is AMGYFSLGRVGCVLE. Cysteine 103 and cysteine 180 form a disulfide bridge. The helical transmembrane segment at 107 to 126 threads the bilayer; it reads GFAVAFFGIAGLCSVAVIAV. Over 127 to 145 the chain is Cytoplasmic; sequence DRYMVVCRPLGAVMFQTKH. A helical transmembrane segment spans residues 146 to 169; sequence ALAGVVFSWVWSFIWNTPPLFGWG. At 170–193 the chain is on the extracellular side; that stretch reads SYQLEGVMTSCAPNWYRRDPVNVS. An N-linked (GlcNAc...) asparagine glycan is attached at asparagine 191. A helical membrane pass occupies residues 194–221; sequence YILCYFMLCFALPFATIIFSYMHLLHTL. At 222-244 the chain is on the cytoplasmic side; sequence WQVAKLQVADSGSTAKVEVQVAR. Residues 245–268 form a helical membrane-spanning segment; that stretch reads MVVIMVMAFLLTWLPYAAFALTVI. Residues 269-276 are Extracellular-facing; the sequence is IDSNIYIN. The helical transmembrane segment at 277 to 301 threads the bilayer; the sequence is PVIGTIPAYLAKSSTVFNPIIYIFM. Lysine 288 carries the N6-(retinylidene)lysine modification. Over 302–346 the chain is Cytoplasmic; sequence NRQFRDYALPCLLCGKNPWAAKEGRDSDTNTLTTTVSKNTSVSPL. Cysteine 315 carries S-palmitoyl cysteine lipidation. Residues 325 to 346 form a disordered region; sequence GRDSDTNTLTTTVSKNTSVSPL. The span at 330 to 346 shows a compositional bias: low complexity; the sequence is TNTLTTTVSKNTSVSPL.

Belongs to the G-protein coupled receptor 1 family. Opsin subfamily. Phosphorylated on some or all of the serine and threonine residues present in the C-terminal region. In terms of tissue distribution, parapineal organ.

It localises to the membrane. The sequence is that of Parapinopsin from Ictalurus punctatus (Channel catfish).